The sequence spans 319 residues: Replication factor C small subunit 2 (319 aa).

44 to 51 lines the ATP pocket; sequence GPPGTGKT.

Belongs to the activator 1 small subunits family. RfcS subfamily. Heteromultimer composed of small subunits (RfcS) and large subunits (RfcL).

Functionally, part of the RFC clamp loader complex which loads the PCNA sliding clamp onto DNA. The sequence is that of Replication factor C small subunit 2 from Pyrobaculum aerophilum (strain ATCC 51768 / DSM 7523 / JCM 9630 / CIP 104966 / NBRC 100827 / IM2).